The chain runs to 1415 residues: DNA-directed RNA polymerase subunit beta' (1415 aa).

Cysteine 214, cysteine 294, cysteine 301, and cysteine 304 together coordinate Zn(2+). Residues 1335–1351 (QNFVDSQGKPQSQSSFI) are compositionally biased toward polar residues. The segment at 1335 to 1390 (QNFVDSQGKPQSQSSFIDDSMSEFSPVKDKSGSVLDDSDFPPGNFDSDFPADNYDL) is disordered.

This sequence belongs to the RNA polymerase beta' chain family. RpoC2 subfamily. In terms of assembly, in cyanobacteria the RNAP catalytic core is composed of 2 alpha, 1 beta, 1 beta', 1 gamma and 1 omega subunit. When a sigma factor is associated with the core the holoenzyme is formed, which can initiate transcription. The cofactor is Zn(2+).

It carries out the reaction RNA(n) + a ribonucleoside 5'-triphosphate = RNA(n+1) + diphosphate. Its function is as follows. DNA-dependent RNA polymerase catalyzes the transcription of DNA into RNA using the four ribonucleoside triphosphates as substrates. This is DNA-directed RNA polymerase subunit beta' from Trichodesmium erythraeum (strain IMS101).